The sequence spans 692 residues: uncharacterized protein (692 aa).

The N-terminal 39 residues, 1-39 (MLRLPSSMPIVSFPANPNLLINPQPSWPSRRGNSAVVVS), are a transit peptide targeting the chloroplast. Residues 189-523 (EISPEPVAAA…RLESLLSESL (335 aa)) enclose the Protein kinase domain. ATP-binding positions include 195-203 (VAAASLGQV) and Lys-218. Asp-343 (proton acceptor) is an active-site residue.

This sequence belongs to the protein kinase superfamily. ADCK protein kinase family.

It is found in the plastid. The protein resides in the chloroplast. It localises to the plastoglobule. This is an uncharacterized protein from Arabidopsis thaliana (Mouse-ear cress).